A 202-amino-acid polypeptide reads, in one-letter code: Ribosome maturation factor RimM (202 aa).

Residues 100–195 (ADEWYPKDLI…YLTLDPPGGL (96 aa)) form the PRC barrel domain.

This sequence belongs to the RimM family. As to quaternary structure, binds ribosomal protein uS19.

It is found in the cytoplasm. An accessory protein needed during the final step in the assembly of 30S ribosomal subunit, possibly for assembly of the head region. Essential for efficient processing of 16S rRNA. May be needed both before and after RbfA during the maturation of 16S rRNA. It has affinity for free ribosomal 30S subunits but not for 70S ribosomes. The chain is Ribosome maturation factor RimM from Bifidobacterium longum (strain NCC 2705).